The chain runs to 134 residues: Large ribosomal subunit protein bL20 (134 aa).

It belongs to the bacterial ribosomal protein bL20 family.

Its function is as follows. Binds directly to 23S ribosomal RNA and is necessary for the in vitro assembly process of the 50S ribosomal subunit. It is not involved in the protein synthesizing functions of that subunit. The sequence is that of Large ribosomal subunit protein bL20 from Rhizobium leguminosarum bv. trifolii (strain WSM2304).